The primary structure comprises 296 residues: Acetylglutamate kinase (296 aa).

Substrate contacts are provided by residues 69 to 70 (GG), R91, and N193.

This sequence belongs to the acetylglutamate kinase family. ArgB subfamily.

It localises to the cytoplasm. It catalyses the reaction N-acetyl-L-glutamate + ATP = N-acetyl-L-glutamyl 5-phosphate + ADP. Its pathway is amino-acid biosynthesis; L-arginine biosynthesis; N(2)-acetyl-L-ornithine from L-glutamate: step 2/4. In terms of biological role, catalyzes the ATP-dependent phosphorylation of N-acetyl-L-glutamate. The polypeptide is Acetylglutamate kinase (Delftia acidovorans (strain DSM 14801 / SPH-1)).